Reading from the N-terminus, the 447-residue chain is Asparagine--tRNA ligase (447 aa).

Belongs to the class-II aminoacyl-tRNA synthetase family. Homodimer.

It localises to the cytoplasm. The catalysed reaction is tRNA(Asn) + L-asparagine + ATP = L-asparaginyl-tRNA(Asn) + AMP + diphosphate + H(+). This chain is Asparagine--tRNA ligase, found in Streptococcus pneumoniae (strain ATCC BAA-255 / R6).